The following is a 538-amino-acid chain: MKAFPVICLGFAIFSSSICVNINILQQIGYIKQQVWQLSYYSQSSSSYVVVKLLPNIQPTDNSCEFKSVTQYNKTLSNLLLPIAENINNIASPSPGSRRHKRFAGIAIGIAALGVATAAQVTAAVSLVQAQTNARAIAAMKNSIQATNRAVFEVKEGTQQLAIAVQAIQDHINTIMNTQLNNMSCQILDNQLATSLGLYLTELTTVFQPQLINPALSPISIQALRSLLGSMTPAVVQATLSTSISAAEILSAGLMEGQIVSVLLDEMQMIVKINIPTIVTQSNALVIDFHSISSFINNQESIIQLPDRILEIGNEQWRYPAKNCKLTRHHIFCQYNEAERLSLETKLCLAGNISACVFSPIAGSYMRRFVALDGTIVANCRSLTCLCKSPSYPIYQPDHHAVTTIDLTSCQTLSLDGLDFSIVSLSNITYAENLTISLSQTINTQPIDISTELSKVNASLQNAVKYIKESNHQLQSVSVSSKIGAIIVAALVLSILSIIISLLFCCWAYIATKEIRRINFKTNHINTISSSVDDLIRY.

The N-terminal stretch at 1-19 (MKAFPVICLGFAIFSSSIC) is a signal peptide. Residues Asn56 and Asn73 are each glycosylated (N-linked (GlcNAc...) asparagine; by host). Positions 103–127 (FAGIAIGIAALGVATAAQVTAAVSL) are fusion peptide. Asn182 carries N-linked (GlcNAc...) asparagine; by host glycosylation. Cystine bridges form between Cys324-Cys333, Cys348-Cys356, Cys380-Cys385, and Cys387-Cys410. N-linked (GlcNAc...) asparagine; by host glycosylation occurs at Asn352. Residues Asn427, Asn433, and Asn457 are each glycosylated (N-linked (GlcNAc...) asparagine; by host). The chain crosses the membrane as a helical span at residues 483–503 (IGAIIVAALVLSILSIIISLL).

It belongs to the paramyxoviruses fusion glycoprotein family. As to quaternary structure, homotrimer; disulfide-linked F1-F2. Interacts with host LAMP1; LAMP2 and LAMP3; these interactions promote the cleavage of the viral fusion protein F. Post-translationally, the inactive precursor F0 is glycosylated and proteolytically cleaved into F1 and F2 to be functionally active. The cleavage is mediated by cellular proteases including host FURIN during the transport and maturation of the polypeptide.

The protein localises to the virion membrane. It localises to the host cell membrane. Functionally, class I viral fusion protein. Under the current model, the protein has at least 3 conformational states: pre-fusion native state, pre-hairpin intermediate state, and post-fusion hairpin state. During viral and plasma cell membrane fusion, the heptad repeat (HR) regions assume a trimer-of-hairpins structure, positioning the fusion peptide in close proximity to the C-terminal region of the ectodomain. The formation of this structure appears to drive apposition and subsequent fusion of viral and plasma cell membranes. Directs fusion of viral and cellular membranes leading to delivery of the nucleocapsid into the cytoplasm. This fusion is pH independent and occurs directly at the outer cell membrane. The trimer of F1-F2 (F protein) probably interacts with HN at the virion surface. Upon HN binding to its cellular receptor, the hydrophobic fusion peptide is unmasked and interacts with the cellular membrane, inducing the fusion between cell and virion membranes. Later in infection, F proteins expressed at the plasma membrane of infected cells could mediate fusion with adjacent cells to form syncytia, a cytopathic effect that could lead to tissue necrosis. This Mumps virus (strain Kilham) (MuV) protein is Fusion glycoprotein F0 (F).